The primary structure comprises 156 residues: uncharacterized protein (156 aa).

Residues 1–12 (MSSRFARSNGNP) show a composition bias toward polar residues. Positions 1-27 (MSSRFARSNGNPNHIRKRNHSPDPIGI) are disordered. At Ser-21 the chain carries Phosphoserine.

The protein localises to the cytoplasm. It is found in the nucleus. This is an uncharacterized protein from Saccharomyces cerevisiae (strain ATCC 204508 / S288c) (Baker's yeast).